The sequence spans 790 residues: Threonine--tRNA ligase 2, cytoplasmic (790 aa).

Ala-2 is modified (N-acetylalanine). Positions 13 to 68 (SRLQRQEEDIRWLCAEVQRLRDEQLRGPERGQAEGPRLTREVAQLQAENRDLHQRL) form a coiled coil. The interval 80–117 (RTEAGRAAAHEPPTQNQEKDTKKKRLKQSEPGREVKQP) is disordered. The segment covering 96–117 (QEKDTKKKRLKQSEPGREVKQP) has biased composition (basic and acidic residues). The TGS domain occupies 148–210 (NVISVRVAGG…EGDSTVELLM (63 aa)). Residue Ser-441 is modified to Phosphoserine. Residues 774–780 (KLKNLKK) carry the Nuclear localization signal motif.

Belongs to the class-II aminoacyl-tRNA synthetase family. May be a component of the multisynthetase complex (MSC), a large multi-subunit complex which contains at least eight different aminoacyl-tRNA synthetases plus three auxillary subunits AIMP1, AIMP2 and EEF1E1. Interacts with the MSC components EPRS1, AIMP1, AIMP2 and KARS1. Ubiquitous (at protein level). Strongly expressed in muscle (at protein level). Moderately expressed in heart and liver (at protein level). Weakly expressed in stomach, kidney, testis, spleen, brain, fat and lung (at protein level).

Its subcellular location is the cytoplasm. It localises to the nucleus. The enzyme catalyses tRNA(Thr) + L-threonine + ATP = L-threonyl-tRNA(Thr) + AMP + diphosphate + H(+). Catalyzes the attachment of threonine to tRNA(Thr) in a two-step reaction: threonine is first activated by ATP to form Thr-AMP and then transferred to the acceptor end of tRNA(Thr). Also edits incorrectly charged tRNA(Thr) via its editing domain, at the post-transfer stage. In Mus musculus (Mouse), this protein is Threonine--tRNA ligase 2, cytoplasmic (Tars3).